A 259-amino-acid chain; its full sequence is 3-dehydroquinate dehydratase (259 aa).

Residues 50–52 (EWR) and Arg-86 contribute to the 3-dehydroquinate site. His-147 serves as the catalytic Proton donor/acceptor. Catalysis depends on Lys-174, which acts as the Schiff-base intermediate with substrate. The 3-dehydroquinate site is built by Arg-216, Ser-235, and Gln-239.

The protein belongs to the type-I 3-dehydroquinase family. Homodimer.

The catalysed reaction is 3-dehydroquinate = 3-dehydroshikimate + H2O. It functions in the pathway metabolic intermediate biosynthesis; chorismate biosynthesis; chorismate from D-erythrose 4-phosphate and phosphoenolpyruvate: step 3/7. Involved in the third step of the chorismate pathway, which leads to the biosynthesis of aromatic amino acids. Catalyzes the cis-dehydration of 3-dehydroquinate (DHQ) and introduces the first double bond of the aromatic ring to yield 3-dehydroshikimate. In Geobacillus sp. (strain WCH70), this protein is 3-dehydroquinate dehydratase.